Reading from the N-terminus, the 174-residue chain is Shikimate kinase 2 (174 aa).

ATP is bound at residue 12–17 (GAGKTT). 2 residues coordinate Mg(2+): threonine 16 and aspartate 32. Residues aspartate 34, arginine 58, and glycine 79 each coordinate substrate. Residues 112 to 126 (AEDPEEAQRPSLTGK) form an LID domain region. Arginine 120 contributes to the ATP binding site. Arginine 139 provides a ligand contact to substrate. ATP is bound at residue glutamine 155.

Belongs to the shikimate kinase family. AroL subfamily. In terms of assembly, monomer. It depends on Mg(2+) as a cofactor.

It is found in the cytoplasm. The catalysed reaction is shikimate + ATP = 3-phosphoshikimate + ADP + H(+). The protein operates within metabolic intermediate biosynthesis; chorismate biosynthesis; chorismate from D-erythrose 4-phosphate and phosphoenolpyruvate: step 5/7. Its function is as follows. Catalyzes the specific phosphorylation of the 3-hydroxyl group of shikimic acid using ATP as a cosubstrate. This is Shikimate kinase 2 from Yersinia pseudotuberculosis serotype IB (strain PB1/+).